The sequence spans 87 residues: Phosphocarrier protein HPr (87 aa).

In terms of domain architecture, HPr spans 1–87 (MASKDFHIVA…AETMTKEGLA (87 aa)). His15 acts as the Pros-phosphohistidine intermediate in catalysis. At Ser46 the chain carries Phosphoserine; by HPrK/P.

This sequence belongs to the HPr family.

Its subcellular location is the cytoplasm. Phosphorylation on Ser-46 inhibits the phosphoryl transfer from enzyme I to HPr. Functionally, general (non sugar-specific) component of the phosphoenolpyruvate-dependent sugar phosphotransferase system (sugar PTS). This major carbohydrate active-transport system catalyzes the phosphorylation of incoming sugar substrates concomitantly with their translocation across the cell membrane. The phosphoryl group from phosphoenolpyruvate (PEP) is transferred to the phosphoryl carrier protein HPr by enzyme I. Phospho-HPr then transfers it to the PTS EIIA domain. In terms of biological role, P-Ser-HPr interacts with the catabolite control protein A (CcpA), forming a complex that binds to DNA at the catabolite response elements cre, operator sites preceding a large number of catabolite-regulated genes. Thus, P-Ser-HPr is a corepressor in carbon catabolite repression (CCR), a mechanism that allows bacteria to coordinate and optimize the utilization of available carbon sources. P-Ser-HPr also plays a role in inducer exclusion, in which it probably interacts with several non-PTS permeases and inhibits their transport activity. The chain is Phosphocarrier protein HPr (ptsH) from Streptococcus salivarius.